Here is a 288-residue protein sequence, read N- to C-terminus: Elongation factor Ts (288 aa).

Residues 82–85 (TDFV) form an involved in Mg(2+) ion dislocation from EF-Tu region.

This sequence belongs to the EF-Ts family.

It localises to the cytoplasm. Its function is as follows. Associates with the EF-Tu.GDP complex and induces the exchange of GDP to GTP. It remains bound to the aminoacyl-tRNA.EF-Tu.GTP complex up to the GTP hydrolysis stage on the ribosome. This is Elongation factor Ts from Prosthecochloris aestuarii (strain DSM 271 / SK 413).